The primary structure comprises 403 residues: Tubby-like F-box protein 6 (403 aa).

The region spanning Ser50 to Gly105 is the F-box domain.

The protein belongs to the TUB family. As to expression, ubiquitous.

This Oryza sativa subsp. japonica (Rice) protein is Tubby-like F-box protein 6 (TULP6).